A 650-amino-acid polypeptide reads, in one-letter code: Protein kinase domain-containing protein ppk38 (650 aa).

Positions 33–315 constitute a Protein kinase domain; the sequence is VTVKRYLAEG…MRNVPIHIYD (283 aa). Disordered regions lie at residues 344 to 442, 517 to 571, and 591 to 616; these read IHQS…PTTP, KVAA…PTNM, and RRVS…EKPM. Polar residues-rich tracts occupy residues 369 to 415 and 533 to 554; these read NVNS…NFRV and SVEN…SSNA.

The chain is Protein kinase domain-containing protein ppk38 (ppk38) from Schizosaccharomyces pombe (strain 972 / ATCC 24843) (Fission yeast).